Reading from the N-terminus, the 108-residue chain is Cell cycle protein GpsB (108 aa).

Residues 32-69 (LDNVIKDYENFNAQIEALKAENEALKKAKYQARNTVSA) adopt a coiled-coil conformation.

It belongs to the GpsB family. As to quaternary structure, forms polymers through the coiled coil domains. Interacts with PBP1, MreC and EzrA.

It localises to the cytoplasm. Its function is as follows. Divisome component that associates with the complex late in its assembly, after the Z-ring is formed, and is dependent on DivIC and PBP2B for its recruitment to the divisome. Together with EzrA, is a key component of the system that regulates PBP1 localization during cell cycle progression. Its main role could be the removal of PBP1 from the cell pole after pole maturation is completed. Also contributes to the recruitment of PBP1 to the division complex. Not essential for septum formation. The polypeptide is Cell cycle protein GpsB (Streptococcus pyogenes serotype M49 (strain NZ131)).